Consider the following 282-residue polypeptide: Glutamyl endopeptidase (282 aa).

The N-terminal stretch at 1–27 (MKKRFLSICTMTIAALATTTMVNTSYA) is a signal peptide. Residues 28 to 66 (KTDTESHNHSSLGTENKNVLDINSSSHNIKPSQNKSYPS) constitute a propeptide that is removed on maturation. Active-site charge relay system residues include His117, Asp159, and Ser235.

This sequence belongs to the peptidase S1B family. In terms of assembly, monomer.

The protein resides in the secreted. It carries out the reaction Preferential cleavage: Glu-|-Xaa, Asp-|-Xaa.. With respect to regulation, inhibited by diisopropyl fluorophosphate. In terms of biological role, exhibits a significant hydrolytic activity for the carbonyl side of glutamic acid. Shows activity toward human fibronectin and type 1 collagen. The polypeptide is Glutamyl endopeptidase (gseA) (Staphylococcus epidermidis).